The chain runs to 738 residues: Pentatricopeptide repeat-containing protein At5g65570 (738 aa).

13 PPR repeats span residues 98 to 128 (AEIS…MSER), 129 to 163 (HIVT…NVLP), 164 to 198 (DEYT…GLEV), 200 to 230 (NVFV…VEEK), 231 to 265 (DVVL…KVQP), 266 to 300 (NEYT…GFES), 301 to 331 (ALAS…IEYP), 332 to 366 (NQVS…SIKP), 367 to 401 (NSFT…GFDR), 402 to 432 (DKYA…LSEV), 433 to 467 (DVIS…GLQP), 468 to 502 (NDVT…KIML), and 503 to 537 (TNDH…DLVL). The interval 537-612 (LWRTLLSACK…NPAMSWVEIN (76 aa)) is type E motif. The type E(+) motif stretch occupies residues 613–644 (KETHTFMAGDLFSHPNSEQILENLEELIKKSK). Positions 645–738 (DLGYVEDKSC…DGSCSCGDYW (94 aa)) are type DYW motif.

Belongs to the PPR family. PCMP-H subfamily.

The polypeptide is Pentatricopeptide repeat-containing protein At5g65570 (PCMP-H47) (Arabidopsis thaliana (Mouse-ear cress)).